Consider the following 144-residue polypeptide: Acidic phospholipase A2 S15-109 (144 aa).

A signal peptide spans 1-19 (MYPAHLLVLLAVCVSLLGA). Residues 20–27 (SDIPPQPL) constitute a propeptide that is removed on maturation. Cystine bridges form between C38–C98, C54–C143, C56–C72, C71–C126, C78–C119, C87–C112, and C105–C117. Ca(2+) is bound by residues Y55, G57, and G59. The active site involves H75. D76 serves as a coordination point for Ca(2+). D120 is a catalytic residue.

This sequence belongs to the phospholipase A2 family. Group I subfamily. D49 sub-subfamily. Requires Ca(2+) as cofactor. Expressed by the venom gland.

Its subcellular location is the secreted. The catalysed reaction is a 1,2-diacyl-sn-glycero-3-phosphocholine + H2O = a 1-acyl-sn-glycero-3-phosphocholine + a fatty acid + H(+). Functionally, snake venom phospholipase A2 (PLA2) that inhibits collagen-induced platelet aggregation. PLA2 catalyzes the calcium-dependent hydrolysis of the 2-acyl groups in 3-sn-phosphoglycerides. This is Acidic phospholipase A2 S15-109 from Austrelaps superbus (Lowland copperhead snake).